The sequence spans 129 residues: Glycine cleavage system H protein (129 aa).

The 83-residue stretch at 24-106 (TYTVGITEHA…YAGGWIFKIK (83 aa)) folds into the Lipoyl-binding domain. Lysine 65 is modified (N6-lipoyllysine).

Belongs to the GcvH family. The glycine cleavage system is composed of four proteins: P, T, L and H. It depends on (R)-lipoate as a cofactor.

In terms of biological role, the glycine cleavage system catalyzes the degradation of glycine. The H protein shuttles the methylamine group of glycine from the P protein to the T protein. The chain is Glycine cleavage system H protein from Citrobacter koseri (strain ATCC BAA-895 / CDC 4225-83 / SGSC4696).